The following is a 179-amino-acid chain: Large ribosomal subunit protein uL6 (179 aa).

This sequence belongs to the universal ribosomal protein uL6 family. As to quaternary structure, part of the 50S ribosomal subunit.

Functionally, this protein binds to the 23S rRNA, and is important in its secondary structure. It is located near the subunit interface in the base of the L7/L12 stalk, and near the tRNA binding site of the peptidyltransferase center. This chain is Large ribosomal subunit protein uL6, found in Chlorobium limicola (strain DSM 245 / NBRC 103803 / 6330).